A 156-amino-acid polypeptide reads, in one-letter code: Small ribosomal subunit protein uS7 (156 aa).

As to quaternary structure, part of the 30S ribosomal subunit. Contacts proteins S9 and S11.

One of the primary rRNA binding proteins, it binds directly to 16S rRNA where it nucleates assembly of the head domain of the 30S subunit. Is located at the subunit interface close to the decoding center, probably blocks exit of the E-site tRNA. The chain is Small ribosomal subunit protein uS7 from Rhodopseudomonas palustris (strain ATCC BAA-98 / CGA009).